A 1409-amino-acid polypeptide reads, in one-letter code: DNA-directed RNA polymerase subunit beta' (1409 aa).

Zn(2+) contacts are provided by C70, C72, C85, and C88. Positions 458, 460, and 462 each coordinate Mg(2+). C813, C887, C894, and C897 together coordinate Zn(2+).

The protein belongs to the RNA polymerase beta' chain family. As to quaternary structure, the RNAP catalytic core consists of 2 alpha, 1 beta, 1 beta' and 1 omega subunit. When a sigma factor is associated with the core the holoenzyme is formed, which can initiate transcription. Mg(2+) is required as a cofactor. It depends on Zn(2+) as a cofactor.

It catalyses the reaction RNA(n) + a ribonucleoside 5'-triphosphate = RNA(n+1) + diphosphate. Functionally, DNA-dependent RNA polymerase catalyzes the transcription of DNA into RNA using the four ribonucleoside triphosphates as substrates. The sequence is that of DNA-directed RNA polymerase subunit beta' from Delftia acidovorans (strain DSM 14801 / SPH-1).